Reading from the N-terminus, the 537-residue chain is CTP synthase (537 aa).

Positions 1 to 268 (MPAKFIFVTG…DSIVVERLKL (268 aa)) are amidoligase domain. A CTP-binding site is contributed by S14. Residue S14 coordinates UTP. Residue 15-20 (SLGKGI) coordinates ATP. Residue Y55 participates in L-glutamine binding. Position 72 (D72) interacts with ATP. The Mg(2+) site is built by D72 and E142. CTP contacts are provided by residues 149–151 (DIE), 189–194 (KTKPTQ), and K225. UTP contacts are provided by residues 189–194 (KTKPTQ) and K225. Residues 293–534 (EIALVGKYVT…IGAACRRAGG (242 aa)) form the Glutamine amidotransferase type-1 domain. Residue G354 coordinates L-glutamine. C381 functions as the Nucleophile; for glutamine hydrolysis in the catalytic mechanism. L-glutamine is bound by residues 382–385 (LGMQ), E405, and R462. Residues H507 and E509 contribute to the active site.

Belongs to the CTP synthase family. Homotetramer.

The catalysed reaction is UTP + L-glutamine + ATP + H2O = CTP + L-glutamate + ADP + phosphate + 2 H(+). The enzyme catalyses L-glutamine + H2O = L-glutamate + NH4(+). It carries out the reaction UTP + NH4(+) + ATP = CTP + ADP + phosphate + 2 H(+). It participates in pyrimidine metabolism; CTP biosynthesis via de novo pathway; CTP from UDP: step 2/2. Its activity is regulated as follows. Allosterically activated by GTP, when glutamine is the substrate; GTP has no effect on the reaction when ammonia is the substrate. The allosteric effector GTP functions by stabilizing the protein conformation that binds the tetrahedral intermediate(s) formed during glutamine hydrolysis. Inhibited by the product CTP, via allosteric rather than competitive inhibition. Catalyzes the ATP-dependent amination of UTP to CTP with either L-glutamine or ammonia as the source of nitrogen. Regulates intracellular CTP levels through interactions with the four ribonucleotide triphosphates. The polypeptide is CTP synthase (Moorella thermoacetica (strain ATCC 39073 / JCM 9320)).